We begin with the raw amino-acid sequence, 517 residues long: Protein AGENET DOMAIN (AGD)-CONTAINING P1 (517 aa).

The interval 1–35 (MLRPRRSLGVSSPAKQRKKAAPKNSMATRANRKRL) is disordered. Plant Agenet, chromatin-binding regions lie at residues 37 to 111 (SYLK…PPMS) and 117 to 173 (KKIV…EWVD). The tract at residues 177-202 (KPPLEETEEEEDESEEDKLDDSEDEE) is disordered. Over residues 181-202 (EETEEEEDESEEDKLDDSEDEE) the composition is skewed to acidic residues. Plant Agenet, chromatin-binding stretches follow at residues 219-287 (QMFS…PRDE), 289-345 (IDFA…DWVD), 378-446 (QAFS…LESV), and 449-505 (SPFE…EWID).

As to expression, expressed ubiquitously during vegetative stage, in meristems (e.g. root tips and shoot apical meristem), and in ovules and young seeds during reproductive stage.

It localises to the nucleus. Its function is as follows. Heterochromatin-binding protein that preferentially occupies long transposons and specifically recognizes the histone H3 'Lys-9' methylation (H3K9me) marks, with a stronger affinity for dimethylated H3K9 (H3K9me2). Required for transcriptional silencing, non-CG DNA methylation (e.g. CHG and CHH regions), and H3K9 dimethylation (H3K9me2) at some loci. Mediates heterochromatin phase separation and chromocenter formation. In Arabidopsis thaliana (Mouse-ear cress), this protein is Protein AGENET DOMAIN (AGD)-CONTAINING P1.